A 266-amino-acid chain; its full sequence is Undecaprenyl-diphosphatase (266 aa).

The next 8 membrane-spanning stretches (helical) occupy residues 1–21 (MTLT…FLPI), 39–59 (QGLA…MIYF), 87–107 (WWVI…KAFI), 111–131 (ARSA…LWYA), 150–172 (LIVG…ITMT), 187–207 (FSFL…TLDL), 218–238 (ALIV…YLFL), and 244–264 (IGML…LLFV).

It belongs to the UppP family.

It is found in the cell inner membrane. The catalysed reaction is di-trans,octa-cis-undecaprenyl diphosphate + H2O = di-trans,octa-cis-undecaprenyl phosphate + phosphate + H(+). In terms of biological role, catalyzes the dephosphorylation of undecaprenyl diphosphate (UPP). Confers resistance to bacitracin. The protein is Undecaprenyl-diphosphatase of Pseudoalteromonas atlantica (strain T6c / ATCC BAA-1087).